The primary structure comprises 258 residues: Acetylglutamate kinase (258 aa).

Substrate is bound by residues glycine 44–glycine 45, arginine 66, and asparagine 158. Residues aspartate 181–leucine 186 and isoleucine 209–threonine 211 each bind ATP.

This sequence belongs to the acetylglutamate kinase family. ArgB subfamily. As to quaternary structure, homodimer.

It localises to the cytoplasm. It catalyses the reaction N-acetyl-L-glutamate + ATP = N-acetyl-L-glutamyl 5-phosphate + ADP. It functions in the pathway amino-acid biosynthesis; L-arginine biosynthesis; N(2)-acetyl-L-ornithine from L-glutamate: step 2/4. Catalyzes the ATP-dependent phosphorylation of N-acetyl-L-glutamate. This is Acetylglutamate kinase from Buchnera aphidicola subsp. Schizaphis graminum (strain Sg).